A 385-amino-acid chain; its full sequence is S-adenosylmethionine synthase (385 aa).

Residue histidine 16 participates in ATP binding. A Mg(2+)-binding site is contributed by aspartate 18. Glutamate 44 contacts K(+). Glutamate 57 and glutamine 100 together coordinate L-methionine. Positions 100-110 are flexible loop; it reads QSPDINQGVDR. Residues 164–166, 230–231, aspartate 239, 245–246, alanine 262, and lysine 266 contribute to the ATP site; these read DGK, KF, and RK. Aspartate 239 is a binding site for L-methionine. Residue lysine 270 coordinates L-methionine.

Belongs to the AdoMet synthase family. Homotetramer; dimer of dimers. The cofactor is Mg(2+). It depends on K(+) as a cofactor.

It localises to the cytoplasm. It carries out the reaction L-methionine + ATP + H2O = S-adenosyl-L-methionine + phosphate + diphosphate. The protein operates within amino-acid biosynthesis; S-adenosyl-L-methionine biosynthesis; S-adenosyl-L-methionine from L-methionine: step 1/1. In terms of biological role, catalyzes the formation of S-adenosylmethionine (AdoMet) from methionine and ATP. The overall synthetic reaction is composed of two sequential steps, AdoMet formation and the subsequent tripolyphosphate hydrolysis which occurs prior to release of AdoMet from the enzyme. This is S-adenosylmethionine synthase from Helicobacter pylori (strain ATCC 700392 / 26695) (Campylobacter pylori).